Consider the following 405-residue polypeptide: Cytoplasmic tRNA 2-thiolation protein 2 (405 aa).

The protein belongs to the CTU2/NCS2 family.

It localises to the cytoplasm. Its pathway is tRNA modification; 5-methoxycarbonylmethyl-2-thiouridine-tRNA biosynthesis. Plays a central role in 2-thiolation of mcm(5)S(2)U at tRNA wobble positions of tRNA(Lys), tRNA(Glu) and tRNA(Gln). May act by forming a heterodimer with NCS6/CTU1 that ligates sulfur from thiocarboxylated URM1 onto the uridine of tRNAs at wobble position. This Drosophila melanogaster (Fruit fly) protein is Cytoplasmic tRNA 2-thiolation protein 2.